We begin with the raw amino-acid sequence, 329 residues long: Helicase VP6-A (329 aa).

Disordered regions lie at residues 27–130 and 189–232; these read INLV…TNGG and DLRR…SEEP. Basic and acidic residues-rich tracts occupy residues 36-58, 65-83, and 96-109; these read EGGK…KDGE, GQKE…DRRI, and SGER…RGDG. Residue K110 participates in ATP binding. Gly residues predominate over residues 110-129; the sequence is KVGGGGGDADAGVGATGTNG. Basic and acidic residues-rich tracts occupy residues 189-207 and 215-232; these read DLRR…ERGG and HGDA…SEEP.

The protein belongs to the reoviruses VP6 family. As to quaternary structure, homohexamer.

Its subcellular location is the virion. The catalysed reaction is ATP + H2O = ADP + phosphate + H(+). Its function is as follows. ATP dependent RNA helicase essential for RNA packaging and viral transcription. Possesses ss- and dsRNA-binding capacity. This Antilocapra americana (Pronghorn) protein is Helicase VP6-A (Segment-9).